Consider the following 340-residue polypeptide: MTQAVLKELAKAELHCHLDGSLSLPAIRKLANMADIILPSSDKELRKYVIAPAQTESLVDYLKTFEFIRPLLQTKEALRFAAYDVARQAALENVIYIEIRFAPELSMDKGLTASDTVLAVLEGLADAQKEFNIVARALVCGMRQSSHKTTKDIIKHIVDLAPKGLVGFDFAGDEFSYPTDSLVDLIQEVKRSGYPMTLHAGECGCAKHIADSLNLGIKRMGHVTALTGQRDLIKRFVEEDVVAEMCLTSNLQTKAASSIQSFPYQELYDAGGKITINTDNRTVSDTNLTKEYSLFVTYFGTKIEDFLVFNQNAVKASFTSDSEKDTLLHKLQENYDSYLK.

The Zn(2+) site is built by H15 and H17. The substrate site is built by H17, D19, and G172. H199 serves as a coordination point for Zn(2+). The active-site Proton donor is the E202. Residue D279 participates in Zn(2+) binding.

It belongs to the metallo-dependent hydrolases superfamily. Adenosine and AMP deaminases family. Adenosine deaminase subfamily. The cofactor is Zn(2+).

The enzyme catalyses adenosine + H2O + H(+) = inosine + NH4(+). It carries out the reaction 2'-deoxyadenosine + H2O + H(+) = 2'-deoxyinosine + NH4(+). Catalyzes the hydrolytic deamination of adenosine and 2-deoxyadenosine. In Streptococcus agalactiae serotype Ia (strain ATCC 27591 / A909 / CDC SS700), this protein is Adenosine deaminase.